The chain runs to 547 residues: RNA polymerase sigma factor sigF, chloroplastic (547 aa).

The span at 1–17 (MEATRNLVSSSPSFQTK) shows a compositional bias: polar residues. Disordered stretches follow at residues 1–28 (MEATRNLVSSSPSFQTKTHLKSSYSSPS) and 54–79 (FPASVLSQEPREESRPLSHALRDDRT). The transit peptide at 1 to 55 (MEATRNLVSSSPSFQTKTHLKSSYSSPSSVVMLHDQTTTPVVNSRHLNSLSRHFP) directs the protein to the chloroplast. A compositionally biased stretch (basic and acidic residues) spans 62–79 (EPREESRPLSHALRDDRT). Ser-94, Ser-95, Ser-174, Ser-176, Ser-177, and Ser-180 each carry phosphoserine; by CK2. Residues 163–226 (ANPSDNIKDS…QKTSAKKKYK (64 aa)) form a disordered region. Low complexity predominate over residues 172–181 (SLSTSSSMSL). Residue Thr-249 is modified to Phosphothreonine; by CK2. The Polymerase core binding motif lies at 335–348 (DLLQEGSMGLMKSV). The segment at residues 505-524 (LSEIGEIYGLSKERVRQLES) is a DNA-binding region (H-T-H motif).

This sequence belongs to the sigma-70 factor family. As to quaternary structure, interacts (via N-terminus) with DG1 (via C-terminus). Post-translationally, phosphorylated to acquire sigma activity; site-specific phosphorylation regulates promoter affinity. Phosphorylation at Ser-174 by chloroplastic CK2 requires prior phosphorylation at Ser-177. Phosphorylation at either Ser-94, Ser-95 or Ser-174 is required for sigma activation. As to expression, expressed in seedling, accumulating progressively. Present in leaves but not in roots.

Its subcellular location is the plastid. The protein localises to the chloroplast. In terms of biological role, sigma factors are initiation factors that promote the attachment of plastid-encoded RNA polymerase (PEP) to specific initiation sites and are then released. Regulates transcription in chloroplast in a DG1-dependent manner. Involved in light-dependent chloroplast development. Required during early plant development and primary leaf formation. The protein is RNA polymerase sigma factor sigF, chloroplastic (SIGF) of Arabidopsis thaliana (Mouse-ear cress).